The primary structure comprises 255 residues: MAWPGPLLLKDRKGRAYLVFPKEGGVFHHHKGSVPHEALLEAGPGGVVRTHLGEELSVHRPTLEEYLLHMKRSATPTYPKDASAMVTLLDLAPGMRVLEAGTGSGGLTLFLARAVGEKGLVESYEARPHHLAQAERNVRAFWQVENVRFHLGKLEEAELEEAAYDGVALDLMEPWKVLEKAALALKPDRFLVAYLPNITQVLELVRAAEAHPFRLERVLEVGWREWEVRLPVAHPRFQQVGHTAFLVALRRWKAS.

S-adenosyl-L-methionine is bound by residues 104-107 (SGGL), Glu125, His130, Glu155, and Asp170.

This sequence belongs to the class I-like SAM-binding methyltransferase superfamily. TRM61 family. In terms of assembly, homotetramer composed of a dimer of dimers.

The enzyme catalyses adenosine(58) in tRNA + S-adenosyl-L-methionine = N(1)-methyladenosine(58) in tRNA + S-adenosyl-L-homocysteine + H(+). In terms of biological role, catalyzes the S-adenosyl-L-methionine-dependent formation of N(1)-methyladenine at position 58 (m1A58) in tRNA. Is required for cell growth at extreme temperatures. In Thermus thermophilus (strain ATCC BAA-163 / DSM 7039 / HB27), this protein is tRNA (adenine(58)-N(1))-methyltransferase TrmI (trmI).